Here is a 1338-residue protein sequence, read N- to C-terminus: MAARASADKLSTAGQDPATPVAQVAPDTSSSADGGPSNGASEPGKVGSQPVAAGAEEKVAGHDGESPRRDSHHLRRFSSKRESTVGGSGTGHSQLGKSISSVSQMHRDEHARLLPASSSMSLAPGMGYENVETEVIDRLSKSHVSLKELVETARQSDPEAFRMAVTLTEQSHPTSGKNRFASLPIEELAKEFGLKDMSTGLTEEQVLENRRRYGPNVLEKDKSEPVWKIFIQQFLSPVVLLLLVAAIASLALQEWVEGAAIFIIVTLNASLATYMEKSASNALAKLASMAAPGCVVVREGKAQTVGAVDVVPGDIVLLSTGNSVAADMRCIESVELKTNEALLTGESEDISKTLRAKDYDTPFATNLCFASTIVTNGSGRGLVFATGMETQVGRIAQQLKKAGEGSRLTPLQRGLNRLGGMIGLIAICVLIIVVVVAILTGYRDPAHPDADPVFTIVLVAVGFAVSSIPEGLPMVVTICLSLGARDMVKRKANVRKLPAVETLGCCSVICSDKTGTLTEGKMTAVRLVTVCRNGKVVDADGLTKSFGFYPTKGFDPNGGIFDYNALDEKTKSNLMLQYRDGAFQDFDAVCHNYGNPANKDPTTKLVRSVMLSGYLNSHATTLSRDPDTNRWLAKGNMSEGAIVVGAAKARFGETVAGQEMCGMHDAKADFPRVQELEVPFNSSRKMMMTVHQLPAVNYFGDICLNNTTGTKYTHCAIVKGAPDRVLQHVRYTVREGISGPSVEWEKQMTPEEIMKVEAVNLELSEQALRVLALTFRPLTDADVAALRRQAGADERLKFALGETREELVLLGVIGSVDPPRVGVREAIDRCGEAGIRVIMITGDQRPTAVAIAKDIGLLTSQDDPEQQSIQCSGLHVDDDPMNEHLPEEELDEIIARVKVFSRAQPEDKIAIVEALKRQGHTVAMTGDGVNDAPALKAADIGVAMGIAGTDVAKGASEMVLLDDNFVTIVAAVEEGRKIYSNIQKFVCFLLGTNIGEIIYLTIAIAASMPLPLEALQVLFLNLMSDGCPAVALAKEPSDDENMKIPPRPRKQPIMTRDWWLYGNLPHTIFEAGCVLMSLALGLYLCTGVVQLNPLHEQCSYFTATQLSHNKDIDYRYFCRSFEYRVTQDYTGWVTHIDFWNPKTGKMEQVLGALAGKHPNVTVETPGLAKYIVEAMSDGCPEGVDTDSETGFCMPKAGTKVSSATDTPKGSAPKDYFDVSARGAKMGRTCSFITAVWCEMLRAYTVRTWQWFFLVFNRNPWMHLACSISATLTSLLTIVPGIQSAFSTCALPWYLYLFAIGCGFVNLILDELIPKPLYRLKKAREARAALTSKAPAIMA.

Positions 1–106 (MAARASADKL…KSISSVSQMH (106 aa)) are disordered. Basic and acidic residues predominate over residues 55-69 (AEEKVAGHDGESPRR). Polar residues predominate over residues 91–104 (GHSQLGKSISSVSQ). 8 helical membrane-spanning segments follow: residues 229–249 (IFIQ…AIAS), 255–275 (WVEG…ATYM), 418–438 (LGGM…VVAI), 456–476 (IVLV…PMVV), 985–1005 (FVCF…IAIA), 1068–1088 (IFEA…CTGV), 1261–1281 (MHLA…VPGI), and 1288–1308 (CALP…NLIL).

The protein belongs to the cation transport ATPase (P-type) (TC 3.A.3) family.

The protein resides in the cell membrane. It carries out the reaction Na(+)(in) + ATP + H2O = Na(+)(out) + ADP + phosphate + H(+). Its activity is regulated as follows. Inhibited by cipargamin, a synthetic spiroindolone. Inhibited by pyrazoleamide PA21A050, structurally unrelated to the spiroindolones. Inhibited by (+)-SJ733, a dihydroisoquinolone compound. In terms of biological role, sodium-exporting ATPase. Required for the extrusion of Na(+) from the parasites to maintain a low cytosolic concentration of Na(+). Required for maintaining the viability of extracellular parasites but not for intracellular growth, egress or invasion. Involved in parasite virulence. This is P-type sodium-transporting ATPase4 from Toxoplasma gondii (strain ATCC 50861 / VEG).